The chain runs to 714 residues: ATP-dependent DNA helicase DinG (714 aa).

In terms of domain architecture, Helicase ATP-binding spans 17 to 294 (ALQDQIPDFI…TCMEQFRPKT (278 aa)). 54-61 (APTGVGKT) contacts ATP. [4Fe-4S] cluster contacts are provided by C120, C194, C199, and C205. Positions 248–251 (DEGH) match the DEAH box motif. A Helicase C-terminal domain is found at 517 to 698 (HIAEMAAYFR…VFPIEQPAVP (182 aa)).

This sequence belongs to the helicase family. DinG subfamily. Type 1 sub-subfamily. The cofactor is [4Fe-4S] cluster.

The enzyme catalyses Couples ATP hydrolysis with the unwinding of duplex DNA at the replication fork by translocating in the 5'-3' direction. This creates two antiparallel DNA single strands (ssDNA). The leading ssDNA polymer is the template for DNA polymerase III holoenzyme which synthesizes a continuous strand.. It catalyses the reaction ATP + H2O = ADP + phosphate + H(+). In terms of biological role, DNA-dependent ATPase and 5'-3' DNA helicase. Unwinds D-loops, R-loops, forked DNA and G-quadruplex DNA. This is ATP-dependent DNA helicase DinG from Salmonella paratyphi A (strain ATCC 9150 / SARB42).